The sequence spans 178 residues: uncharacterized protein (178 aa).

The next 4 membrane-spanning stretches (helical) occupy residues 29–49 (AATG…AYLF), 76–96 (VISI…YFLL), 105–125 (PGIL…NPIF), and 139–159 (IITT…SISF).

The protein resides in the cell membrane. This is an uncharacterized protein from Bacillus subtilis (strain 168).